A 299-amino-acid polypeptide reads, in one-letter code: Putative ammonium transporter 4 member 1 (299 aa).

Helical transmembrane passes span 16-36, 59-79, 104-124, 158-178, and 218-238; these read AWPL…LVIL, VLLT…GFNG, LLVW…ISAV, VLHT…LLLL, and AGIA…CLAV.

This sequence belongs to the ammonia transporter channel (TC 1.A.11.2) family.

It is found in the membrane. This is Putative ammonium transporter 4 member 1 (AMT4-1) from Oryza sativa subsp. japonica (Rice).